Reading from the N-terminus, the 343-residue chain is Protein RecA (343 aa).

G64–T71 is an ATP binding site.

This sequence belongs to the RecA family.

It localises to the cytoplasm. Its function is as follows. Can catalyze the hydrolysis of ATP in the presence of single-stranded DNA, the ATP-dependent uptake of single-stranded DNA by duplex DNA, and the ATP-dependent hybridization of homologous single-stranded DNAs. It interacts with LexA causing its activation and leading to its autocatalytic cleavage. This Bacillus cereus (strain ATCC 14579 / DSM 31 / CCUG 7414 / JCM 2152 / NBRC 15305 / NCIMB 9373 / NCTC 2599 / NRRL B-3711) protein is Protein RecA.